The following is a 108-amino-acid chain: Ribonuclease P protein component 4 (108 aa).

Residues Cys-60, Cys-63, Cys-86, and Cys-89 each contribute to the Zn(2+) site.

The protein belongs to the eukaryotic/archaeal RNase P protein component 4 family. As to quaternary structure, consists of a catalytic RNA component and at least 4-5 protein subunits. The cofactor is Zn(2+).

The protein resides in the cytoplasm. The catalysed reaction is Endonucleolytic cleavage of RNA, removing 5'-extranucleotides from tRNA precursor.. Functionally, part of ribonuclease P, a protein complex that generates mature tRNA molecules by cleaving their 5'-ends. The sequence is that of Ribonuclease P protein component 4 from Sulfurisphaera tokodaii (strain DSM 16993 / JCM 10545 / NBRC 100140 / 7) (Sulfolobus tokodaii).